Here is a 485-residue protein sequence, read N- to C-terminus: Probable alginate O-acetylase AlgI (485 aa).

A run of 9 helical transmembrane segments spans residues 7–24 (VFLF…YLSG), 39–61 (FYAW…NYWI), 78–100 (WLLL…NFGV), 115–137 (FILT…ISYI), 150–172 (NLID…VLRF), 312–334 (FLTM…WGAW), 360–382 (AFTF…HVAA), 402–424 (AQLT…FFGL), and 461–483 (ILLL…FLYF). Residue His-322 is part of the active site.

It belongs to the membrane-bound acyltransferase family.

Its subcellular location is the cell inner membrane. It functions in the pathway glycan biosynthesis; alginate biosynthesis. Its function is as follows. Together with AlgJ and AlgF, forms an inner membrane complex which probably interacts with the alginate polymerization-transport complex and adds acetyl groups at the O-2 and O-3 positions of mannuronate residues. Acetylation of alginate is important for the architecture of biofilms and increases the ability of alginate to act as a defense barrier. The protein is Probable alginate O-acetylase AlgI (algI) of Pseudomonas putida (strain ATCC 47054 / DSM 6125 / CFBP 8728 / NCIMB 11950 / KT2440).